We begin with the raw amino-acid sequence, 306 residues long: Replication termination factor 2 (306 aa).

The segment at 193 to 276 is disordered; the sequence is AKLEKKTKKP…RSIADSEESE (84 aa). A compositionally biased stretch (basic and acidic residues) spans 226 to 240; sequence GKPEEASLDSREKKT. The segment covering 243–255 has biased composition (polar residues); it reads APKSTAMNESSSG. The residue at position 287 (Ser287) is a Phosphoserine.

This sequence belongs to the rtf2 family. As to quaternary structure, interacts with DDI2; probably also interacts with DDI1. Post-translationally, undergoes proteasomal degradation, via DDI1 and DDI2. Removal from stalled replisomes and degradation are required for genome stability.

The protein resides in the chromosome. Replication termination factor which is a component of the elongating replisome. Required for ATR pathway signaling upon DNA damage and has a positive activity during DNA replication. Might function to facilitate fork pausing at replication fork barriers like the rDNA. May be globally required to stimulate ATR signaling after the fork stalls or encounters a lesion. Interacts with nascent DNA. The protein is Replication termination factor 2 of Homo sapiens (Human).